Reading from the N-terminus, the 560-residue chain is Putative ABC transporter ATP-binding protein SP_0483 (560 aa).

ABC transporter domains lie at 6 to 247 and 297 to 528; these read IEWK…GIRE and FRLE…ANLK. ATP-binding positions include 40–47 and 329–336; these read GPSGSGKS and GKNGAGKS.

Belongs to the ABC transporter superfamily.

The protein localises to the cell membrane. Its function is as follows. Probably part of an ABC transporter complex. Responsible for energy coupling to the transport system. The sequence is that of Putative ABC transporter ATP-binding protein SP_0483 from Streptococcus pneumoniae serotype 4 (strain ATCC BAA-334 / TIGR4).